The sequence spans 360 residues: DNA integrity scanning protein DisA (360 aa).

A DAC domain is found at glutamate 11 to isoleucine 149. Residues glycine 78, leucine 96, and methionine 109 to threonine 113 each bind ATP.

It belongs to the DisA family. In terms of assembly, homooligomer. Interacts with RadA. It depends on Mg(2+) as a cofactor.

The protein localises to the cytoplasm. It catalyses the reaction 2 ATP = 3',3'-c-di-AMP + 2 diphosphate. Diadenylate cyclase (DAC) activity is inhibited 2-fold by Holliday junction (HJ) DNA, further addition of RecG inhibits DAC activity 11-fold; RecG may relocate DisA from the HJ. DAC is inhibited by the interaction with RadA. Diadenylate cyclase activity is not affected by ssDNA or dsDNA, but three- and four-way junctions strongly inhibit the activity of DisA, suggesting the enzyme is regulated by branched nucleic acids. Participates in a DNA-damage check-point that is active prior to asymmetric division when DNA is damaged. Forms globular foci that rapidly scan along the chromosomes during sporulation, searching for lesions. Its ability to scan through the chromosome rapidly is due to its non-specific DNA-binding. When a lesion is present, DisA pauses at the lesion site. This triggers a cellular response that culminates in a temporary block in sporulation initiation. It is required, at least partially, to inhibit the activity of the transcription factor spo0A, which controls, among others, early sporulation genes. In B.subtilis c-di-AMP is a second messenger that mediates growth, DNA repair and cell wall homeostasis; it is toxic when present in excess. Limits the replication fork reggression activity of RecG; DisA inhibits the ATPase activity of RecG. By limiting RecG-mediated fork regression, DisA provides time for removal of potentially lethal DNA lesions. Functionally, one of 3 paralogous diadenylate cyclases (DAC) in this bacteria. Has diadenylate cyclase activity, catalyzing the condensation of 2 ATP molecules into cyclic di-AMP (c-di-AMP). c-di-AMP acts as a signaling molecule that couples DNA integrity with progression of sporulation. The rise in c-di-AMP level generated by DisA while scanning the chromosome operates as a positive signal that advances sporulation; upon encountering a lesion, the DisA focus arrests at the damaged site and halts c-di-AMP synthesis. Does not convert GTP to c-di-GMP. This chain is DNA integrity scanning protein DisA, found in Bacillus subtilis (strain 168).